A 1241-amino-acid polypeptide reads, in one-letter code: Plasma membrane calcium-transporting ATPase 4 (1241 aa).

The Cytoplasmic segment spans residues 1 to 92; it reads MTNPSDRVLP…NVIPPKKPKT (92 aa). Residue Ser-13 is modified to Phosphoserine. Residues 93-113 traverse the membrane as a helical segment; the sequence is FLELVWEALQDVTLIILEIAA. Topologically, residues 114–150 are extracellular; the sequence is IISLVLSFYRPAGEENELCGQVATTPEDENEAQAGWI. Residues 151-171 form a helical membrane-spanning segment; it reads EGAAILFSVIIVVLVTAFNDW. The Cytoplasmic portion of the chain corresponds to 172-356; it reads SKEKQFRGLQ…KEKSVLQGKL (185 aa). Positions 294–318 are disordered; it reads EGEKKKKGKKQGVPENRNKAKTQDG. Ser-328 carries the phosphoserine modification. The helical transmembrane segment at 357 to 376 threads the bilayer; sequence TRLAVQIGKAGLLMSALTVF. The Extracellular segment spans residues 377–409; it reads ILILYFVIDNFVINRRPWLPECTPIYIQYFVKF. A helical membrane pass occupies residues 410-427; the sequence is FIIGITVLVVAVPEGLPL. The Cytoplasmic portion of the chain corresponds to 428–840; the sequence is AVTISLAYSV…MWGRNVYDSI (413 aa). Residue Asp-465 is the 4-aspartylphosphate intermediate of the active site. 2 residues coordinate Mg(2+): Asp-785 and Asp-789. A helical membrane pass occupies residues 841-860; sequence SKFLQFQLTVNVVAVIVAFT. At 861–870 the chain is on the extracellular side; sequence GACITQDSPL. Residues 871 to 891 form a helical membrane-spanning segment; the sequence is KAVQMLWVNLIMDTFASLALA. Residues 892–911 lie on the Cytoplasmic side of the membrane; it reads TEPPTESLLKRRPYGRNKPL. Residues 912–934 form a helical membrane-spanning segment; sequence ISRTMMKNILGHAFYQLIVIFIL. Over 935-952 the chain is Extracellular; that stretch reads VFAGEKFFDIDSGRKAPL. The helical transmembrane segment at 953–974 threads the bilayer; the sequence is HSPPSQHYTIVFNTFVLMQLFN. Over 975-993 the chain is Cytoplasmic; that stretch reads EINSRKIHGEKNVFSGIYR. The helical transmembrane segment at 994-1015 threads the bilayer; the sequence is NIIFCSVVLGTFICQIFIVEFG. The Extracellular portion of the chain corresponds to 1016–1025; it reads GKPFSCTSLS. A helical membrane pass occupies residues 1026–1047; sequence LSQWLWCLFIGIGELLWGQFIS. Over 1048–1241 the chain is Cytoplasmic; it reads AIPTRSLKFL…SSLQSLETSV (194 aa). Positions 1086-1103 are calmodulin-binding subdomain A; that stretch reads LRRGQILWFRGLNRIQTQ. Thr-1102 carries the post-translational modification Phosphothreonine; by PKC. The interval 1104–1113 is calmodulin-binding subdomain B; that stretch reads IDVINTFQTG.

The protein belongs to the cation transport ATPase (P-type) (TC 3.A.3) family. Type IIB subfamily. In terms of assembly, interacts with PDZD11. Interacts with SLC35G1 and STIM1. Interacts with calmodulin. In terms of tissue distribution, isoform XB is the most abundant isoform and is expressed ubiquitously. Isoforms containing segment Z have only been detected in heart, while isoforms containing segment a have been found in heart, stomach and brain cortex.

The protein resides in the cell membrane. It is found in the cell projection. It localises to the cilium. Its subcellular location is the flagellum membrane. It catalyses the reaction Ca(2+)(in) + ATP + H2O = Ca(2+)(out) + ADP + phosphate + H(+). Activated by calcium/calmodulin. In terms of biological role, calcium/calmodulin-regulated and magnesium-dependent enzyme that catalyzes the hydrolysis of ATP coupled with the transport of calcium out of the cell. By regulating sperm cell calcium homeostasis, may play a role in sperm motility. The sequence is that of Plasma membrane calcium-transporting ATPase 4 from Homo sapiens (Human).